A 156-amino-acid chain; its full sequence is Oxidized purine nucleoside triphosphate hydrolase (156 aa).

The Nudix hydrolase domain maps to 3–132 (ASRLYTLVLV…WFPLLLQKKK (130 aa)). A 2-oxo-dATP-binding site is contributed by threonine 8. 8-oxo-dGMP contacts are provided by threonine 8 and lysine 23. 8-oxo-dGTP contacts are provided by threonine 8 and lysine 23. 2 residues coordinate N(6)-methyl-AMP: threonine 8 and lysine 23. Positions 8 and 23 each coordinate O(6)-methyl-dGMP. Position 27 (phenylalanine 27) interacts with 8-oxo-ATP. 2-oxo-dATP-binding positions include asparagine 33 and 35-38 (FGGK). Residue asparagine 33 participates in 8-oxo-dGMP binding. 8-oxo-dGTP contacts are provided by residues asparagine 33 and 35–38 (FGGK). Asparagine 33 is a binding site for O(6)-methyl-dGMP. Residues 35-38 (FGGK) and glutamate 52 contribute to the 8-oxo-ATP site. Mg(2+) contacts are provided by glycine 36, glutamate 52, glutamate 55, glutamate 56, and glutamate 100. Residues 37-58 (GKVQEGETIEDGARRELQEESG) carry the Nudix box motif. Glutamate 56 lines the 8-oxo-ATP pocket. Position 117–120 (117–120 (WPDD)) interacts with 2-oxo-dATP. 117 to 120 (WPDD) serves as a coordination point for 8-oxo-dGMP. 117-120 (WPDD) is a binding site for 8-oxo-dGTP. 117-120 (WPDD) is a N(6)-methyl-AMP binding site. 117–120 (WPDD) lines the O(6)-methyl-dGMP pocket. Residue 117-120 (WPDD) participates in 8-oxo-ATP binding.

It belongs to the Nudix hydrolase family. Monomer. It depends on Mg(2+) as a cofactor. Post-translationally, the N-terminus is blocked. As to expression, widely expressed with highest expression in thymus, testis, embryo and proliferating blood lymphocytes.

Its subcellular location is the cytoplasm. The protein localises to the cytosol. The protein resides in the mitochondrion matrix. It localises to the nucleus. It catalyses the reaction 2-oxo-dATP + H2O = 2-oxo-dAMP + diphosphate + H(+). The enzyme catalyses 2-oxo-ATP + H2O = 2-oxo-AMP + diphosphate + H(+). The catalysed reaction is 8-oxo-dGTP + H2O = 8-oxo-dGMP + diphosphate + H(+). It carries out the reaction 8-oxo-dATP + H2O = 8-oxo-dAMP + diphosphate + H(+). It catalyses the reaction O(6)-methyl-dGTP + H2O = O(6)-methyl-dGMP + diphosphate + H(+). The enzyme catalyses N(6)-methyl-dATP + H2O = N(6)-methyl-dAMP + diphosphate + H(+). The catalysed reaction is N(6)-methyl-ATP + H2O = N(6)-methyl-AMP + diphosphate + H(+). Its activity is regulated as follows. Inhibited by 2-oxo-dADP and 8-oxo-dGDP. In terms of biological role, oxidized purine nucleoside triphosphate hydrolase which is a prominent sanitizer of the oxidized nucleotide pool. Catalyzes the hydrolysis of 2-oxo-dATP (2-hydroxy-dATP) into 2-oxo-dAMP. Also has a significant hydrolase activity toward 2-oxo-ATP, 8-oxo-dGTP and 8-oxo-dATP. Through the hydrolysis of oxidized purine nucleoside triphosphates, prevents their incorporation into DNA and the subsequent transversions A:T to C:G and G:C to T:A. Also catalyzes the hydrolysis of methylated purine nucleoside triphosphate preventing their integration into DNA. Through this antimutagenic activity protects cells from oxidative stress. This Homo sapiens (Human) protein is Oxidized purine nucleoside triphosphate hydrolase (NUDT1).